Reading from the N-terminus, the 239-residue chain is MSQKQRIDQQPAFVLHTYPWRETSLVVEIFSRDHGRVALVAKGARRPMSALRGVIMAFQPLLMDWSGGGEVKTLVRAEWRGGQPLLTGRALMCGYYLNELLVRLTAREDAHPALFEAYADALSQLGRGDVAPILRRFELTLLRELGYGIGLDLEGDSNRPVDPVQQYVYIIEKGPVRLAGDDEGLPGVSGQTLLDMAHGDFSRAETLFQSKALLRLLINHYLGGQPLQSRRVLKELQEL.

This sequence belongs to the RecO family.

Functionally, involved in DNA repair and RecF pathway recombination. In Aromatoleum aromaticum (strain DSM 19018 / LMG 30748 / EbN1) (Azoarcus sp. (strain EbN1)), this protein is DNA repair protein RecO.